The primary structure comprises 227 residues: MPEINTSHLDEQQVQLLAEMCILIDENDNKIGADTKKNCHLNENIDKGLLHRAFSVFLFNTENKLLLQQRSDAKITFPGCFTNSCCSHPLSNPGELEENDAIGVKRAAQRRLKAELGIPLEEVDPNEMHYLTRIYYKAQSDGIWGEHEIDYILFLKKNVTLNPDPNEIKSYCYVSKEELKELVKKAASGEVKLTPWFKIIVDTFLFKWWDNLNHLSQFVDHEKIHRM.

Residue K36 coordinates substrate. Residues H40 and H51 each coordinate Mg(2+). Positions 49 to 199 constitute a Nudix hydrolase domain; sequence LLHRAFSVFL…EVKLTPWFKI (151 aa). R70 and K74 together coordinate substrate. The active site involves C86. S87 lines the substrate pocket. Positions 146 and 148 each coordinate Mg(2+). E148 is an active-site residue. K176 bears the N6-acetyllysine mark. The Microbody targeting signal motif lies at 225–227; that stretch reads HRM.

Belongs to the IPP isomerase type 1 family. As to quaternary structure, monomer. Mg(2+) is required as a cofactor.

The protein localises to the peroxisome. It carries out the reaction isopentenyl diphosphate = dimethylallyl diphosphate. It functions in the pathway isoprenoid biosynthesis; dimethylallyl diphosphate biosynthesis; dimethylallyl diphosphate from isopentenyl diphosphate: step 1/1. Its function is as follows. Catalyzes the 1,3-allylic rearrangement of the homoallylic substrate isopentenyl (IPP) to its highly electrophilic allylic isomer, dimethylallyl diphosphate (DMAPP). This chain is Isopentenyl-diphosphate Delta-isomerase 1 (IDI1), found in Mesocricetus auratus (Golden hamster).